The chain runs to 232 residues: Phosphatidylserine decarboxylase proenzyme (232 aa).

Ser-190 (schiff-base intermediate with substrate; via pyruvic acid) is an active-site residue. Ser-190 is subject to Pyruvic acid (Ser); by autocatalysis.

Belongs to the phosphatidylserine decarboxylase family. PSD-A subfamily. Heterodimer of a large membrane-associated beta subunit and a small pyruvoyl-containing alpha subunit. It depends on pyruvate as a cofactor. Is synthesized initially as an inactive proenzyme. Formation of the active enzyme involves a self-maturation process in which the active site pyruvoyl group is generated from an internal serine residue via an autocatalytic post-translational modification. Two non-identical subunits are generated from the proenzyme in this reaction, and the pyruvate is formed at the N-terminus of the alpha chain, which is derived from the carboxyl end of the proenzyme. The post-translation cleavage follows an unusual pathway, termed non-hydrolytic serinolysis, in which the side chain hydroxyl group of the serine supplies its oxygen atom to form the C-terminus of the beta chain, while the remainder of the serine residue undergoes an oxidative deamination to produce ammonia and the pyruvoyl prosthetic group on the alpha chain.

It is found in the cell membrane. The enzyme catalyses a 1,2-diacyl-sn-glycero-3-phospho-L-serine + H(+) = a 1,2-diacyl-sn-glycero-3-phosphoethanolamine + CO2. It functions in the pathway phospholipid metabolism; phosphatidylethanolamine biosynthesis; phosphatidylethanolamine from CDP-diacylglycerol: step 2/2. Catalyzes the formation of phosphatidylethanolamine (PtdEtn) from phosphatidylserine (PtdSer). The sequence is that of Phosphatidylserine decarboxylase proenzyme from Cereibacter sphaeroides (strain KD131 / KCTC 12085) (Rhodobacter sphaeroides).